A 513-amino-acid polypeptide reads, in one-letter code: Exoglucanase 1 (513 aa).

The first 17 residues, methionine 1–alanine 17, serve as a signal peptide directing secretion. The residue at position 18 (glutamine 18) is a Pyrrolidone carboxylic acid. The catalytic stretch occupies residues glutamine 18–asparagine 453. 10 cysteine pairs are disulfide-bonded: cysteine 21–cysteine 89, cysteine 36–cysteine 42, cysteine 67–cysteine 88, cysteine 78–cysteine 84, cysteine 155–cysteine 414, cysteine 189–cysteine 227, cysteine 193–cysteine 226, cysteine 247–cysteine 273, cysteine 255–cysteine 260, and cysteine 278–cysteine 348. N-linked (GlcNAc) asparagine glycosylation is present at asparagine 62. The active-site Nucleophile is the glutamate 229. The Proton donor/acceptor role is filled by glutamate 234. 2 N-linked (GlcNAc) asparagine glycosylation sites follow: asparagine 287 and asparagine 401. Residues asparagine 401–asparagine 437 are compositionally biased toward polar residues. Residues asparagine 401–serine 480 are disordered. A compositionally biased stretch (gly residues) spans proline 449–arginine 459. Residues proline 454–proline 477 are linker. Low complexity predominate over residues glycine 460–threonine 478. A glycan (O-linked (Man) threonine) is linked at threonine 461. 3 O-linked (Man...) threonine glycosylation sites follow: threonine 462, threonine 463, and threonine 464. The O-linked (Man) threonine glycan is linked to threonine 469. O-linked (Man...) threonine glycans are attached at residues threonine 470 and threonine 471. 2 O-linked (Man) serine glycosylation sites follow: serine 473 and serine 474. The CBM1 domain maps to proline 477–leucine 513. A glycan (O-linked (Man) threonine) is linked at threonine 478. O-linked (Man) serine glycans are attached at residues serine 480 and serine 491. Cystine bridges form between cysteine 485/cysteine 502 and cysteine 496/cysteine 512.

Belongs to the glycosyl hydrolase 7 (cellulase C) family. N-glycosylated. The catalytic core domain comprises three N-linked glycans which each consist of a single N-acetylglucosamine residue. In terms of processing, O-glycosylated. Within the linker domain, all 8 threonines are variably glycosylated with between at least one, and up to three, mannose residues per site. All serines in this domain are at least partially glycosylated with a single mannose residue. O-glycosylation of the cellulase linker provides protection from proteolysis. Linker glycans also contribute to binding affinity of cellobiohydrolases to cellulose.

It localises to the secreted. The catalysed reaction is Hydrolysis of (1-&gt;4)-beta-D-glucosidic linkages in cellulose and cellotetraose, releasing cellobiose from the non-reducing ends of the chains.. In terms of biological role, exocellobiohydrolases (CBH) that catalyzes the hydrolysis of 1,4-beta-D-glucosidic bonds in cellulose to release the disaccharide cellobiose. The degradation of cellulose involves an interplay between different cellulolytic enzymes. Hydrolysis starts with endoglucanases (EGs), which cut internal beta-1,4-glucosidic bonds in cellulose to reduce the polymerization degree of the substrate and create new chain ends for exocellobiohydrolases (CBHs). The CBHs release the disaccharide cellobiose from the non-reducing end of the cellulose polymer chain. Finally, beta-1,4-glucosidases hydrolyze the cellobiose and other short cello-oligosaccharides into glucose units. In Hypocrea jecorina (Trichoderma reesei), this protein is Exoglucanase 1 (cbh1).